The primary structure comprises 95 residues: DNA-directed RNA polymerase subunit Rpo11 (95 aa).

Belongs to the archaeal Rpo11/eukaryotic RPB11/RPC19 RNA polymerase subunit family. In terms of assembly, part of the RNA polymerase complex.

It is found in the cytoplasm. The enzyme catalyses RNA(n) + a ribonucleoside 5'-triphosphate = RNA(n+1) + diphosphate. In terms of biological role, DNA-dependent RNA polymerase (RNAP) catalyzes the transcription of DNA into RNA using the four ribonucleoside triphosphates as substrates. The protein is DNA-directed RNA polymerase subunit Rpo11 of Pyrococcus furiosus (strain ATCC 43587 / DSM 3638 / JCM 8422 / Vc1).